We begin with the raw amino-acid sequence, 101 residues long: UPF0358 protein EF_2458 (101 aa).

The protein belongs to the UPF0358 family.

The sequence is that of UPF0358 protein EF_2458 from Enterococcus faecalis (strain ATCC 700802 / V583).